Reading from the N-terminus, the 482-residue chain is GTPase Obg (482 aa).

Residues P2–V159 form the Obg domain. The region spanning A160–A341 is the OBG-type G domain. Residues G166–S173, F191–A195, D212–G215, N292–D295, and S322–V324 each bind GTP. Mg(2+) contacts are provided by S173 and T193. One can recognise an OCT domain in the interval P359–P437. A disordered region spans residues R450–E482. Residues T452–K468 are compositionally biased toward basic and acidic residues.

Belongs to the TRAFAC class OBG-HflX-like GTPase superfamily. OBG GTPase family. Monomer. The cofactor is Mg(2+).

It localises to the cytoplasm. Its function is as follows. An essential GTPase which binds GTP, GDP and possibly (p)ppGpp with moderate affinity, with high nucleotide exchange rates and a fairly low GTP hydrolysis rate. Plays a role in control of the cell cycle, stress response, ribosome biogenesis and in those bacteria that undergo differentiation, in morphogenesis control. The polypeptide is GTPase Obg (Mycolicibacterium gilvum (strain PYR-GCK) (Mycobacterium gilvum (strain PYR-GCK))).